We begin with the raw amino-acid sequence, 353 residues long: Inactive ubiquitin thioesterase OTULINL (353 aa).

The interval 1–80 is required for membrane binding; the sequence is MEAPRSAPRE…KWWIGYLQRK (80 aa). Positions 125-353 constitute an OTU domain; the sequence is KCVRAVKRDN…NGHHYHIPVF (229 aa).

The protein belongs to the peptidase C65 family. Otulin subfamily. Does not bind ubiquitin or ubiquitin-like proteins.

It is found in the cytoplasm. Its subcellular location is the endoplasmic reticulum membrane. It localises to the nucleus envelope. In terms of biological role, lacks deubiquitinase activity. The sequence is that of Inactive ubiquitin thioesterase OTULINL from Mus musculus (Mouse).